A 188-amino-acid polypeptide reads, in one-letter code: Urease accessory protein UreE (188 aa).

The segment at Ala-142–Ser-174 is disordered. Over residues His-157 to Ala-172 the composition is skewed to basic and acidic residues.

This sequence belongs to the UreE family.

It localises to the cytoplasm. Involved in urease metallocenter assembly. Binds nickel. Probably functions as a nickel donor during metallocenter assembly. The sequence is that of Urease accessory protein UreE from Tolumonas auensis (strain DSM 9187 / NBRC 110442 / TA 4).